Here is a 408-residue protein sequence, read N- to C-terminus: Hepatocyte nuclear factor 4-gamma (408 aa).

Positions 9–84 (NCLCAICGDR…AGMKKEAVQN (76 aa)) form a DNA-binding region, nuclear receptor. 2 NR C4-type zinc fingers span residues 12 to 32 (CAIC…CDGC) and 48 to 72 (CRFS…LRKC). A Phosphoserine modification is found at Ser-94. The region spanning 99–328 (SNIPSINTLA…NLLQEMLLGG (230 aa)) is the NR LBD domain. Positions 368–390 (ISTPETPLPSPPQGSGQEQYKIA) are disordered. Residues Thr-370 and Thr-373 each carry the phosphothreonine modification. Ser-377 is subject to Phosphoserine.

It belongs to the nuclear hormone receptor family. NR2 subfamily. In terms of tissue distribution, expressed in pancreas, kidney, small intestine and testis. Weakly expressed in colon. Not expressed in liver, skeletal muscle, lung, placenta, brain, heart, peripheral blood, ovary, prostate, thymus and spleen.

It localises to the nucleus. In terms of biological role, transcription factor. Has a lower transcription activation potential than HNF4-alpha. The protein is Hepatocyte nuclear factor 4-gamma (HNF4G) of Homo sapiens (Human).